The following is a 449-amino-acid chain: GTPase Der (449 aa).

2 consecutive EngA-type G domains span residues 4–174 (PIVA…PPKT) and 183–358 (LRIA…VQRQ). GTP is bound by residues 10-17 (GRPNVGKS), 57-61 (DTAGV), 126-129 (NKCD), 189-196 (GRPNVGKS), 236-240 (DTAGI), and 301-304 (NKWD). The region spanning 359–444 (KRVPTSELNN…PIVIVFRSRE (86 aa)) is the KH-like domain.

It belongs to the TRAFAC class TrmE-Era-EngA-EngB-Septin-like GTPase superfamily. EngA (Der) GTPase family. As to quaternary structure, associates with the 50S ribosomal subunit.

Functionally, GTPase that plays an essential role in the late steps of ribosome biogenesis. This is GTPase Der from Chloroflexus aurantiacus (strain ATCC 29366 / DSM 635 / J-10-fl).